The following is a 224-amino-acid chain: Transcriptional regulatory protein TctD (224 aa).

Residues 2-116 (RLLLAEDNRE…ELDARLRALL (115 aa)) enclose the Response regulatory domain. Aspartate 51 is modified (4-aspartylphosphate). A DNA-binding region (ompR/PhoB-type) is located at residues 121–219 (GQVHEVQQLG…LRGLGYVLER (99 aa)).

In terms of biological role, transcriptional activator of the tctI tricarboxylate transport system operon. In Salmonella typhimurium (strain SL1344), this protein is Transcriptional regulatory protein TctD (tctD).